A 348-amino-acid polypeptide reads, in one-letter code: Holliday junction branch migration complex subunit RuvB (348 aa).

Residues 4 to 184 form a large ATPase domain (RuvB-L) region; sequence ADRLIAASGR…FGIVQRLEFY (181 aa). ATP-binding positions include isoleucine 23, arginine 24, glycine 65, lysine 68, threonine 69, threonine 70, 131-133, arginine 174, tyrosine 184, and arginine 221; that span reads EDF. Threonine 69 serves as a coordination point for Mg(2+). Residues 185–255 are small ATPAse domain (RuvB-S); it reads SDKDLATIVS…VADMALNLLD (71 aa). The head domain (RuvB-H) stretch occupies residues 258 to 348; that stretch reads ERGFDHSDRR…GGDFSEPGDE (91 aa). 3 residues coordinate DNA: arginine 294, arginine 313, and arginine 318.

Belongs to the RuvB family. Homohexamer. Forms an RuvA(8)-RuvB(12)-Holliday junction (HJ) complex. HJ DNA is sandwiched between 2 RuvA tetramers; dsDNA enters through RuvA and exits via RuvB. An RuvB hexamer assembles on each DNA strand where it exits the tetramer. Each RuvB hexamer is contacted by two RuvA subunits (via domain III) on 2 adjacent RuvB subunits; this complex drives branch migration. In the full resolvosome a probable DNA-RuvA(4)-RuvB(12)-RuvC(2) complex forms which resolves the HJ.

Its subcellular location is the cytoplasm. The catalysed reaction is ATP + H2O = ADP + phosphate + H(+). The RuvA-RuvB-RuvC complex processes Holliday junction (HJ) DNA during genetic recombination and DNA repair, while the RuvA-RuvB complex plays an important role in the rescue of blocked DNA replication forks via replication fork reversal (RFR). RuvA specifically binds to HJ cruciform DNA, conferring on it an open structure. The RuvB hexamer acts as an ATP-dependent pump, pulling dsDNA into and through the RuvAB complex. RuvB forms 2 homohexamers on either side of HJ DNA bound by 1 or 2 RuvA tetramers; 4 subunits per hexamer contact DNA at a time. Coordinated motions by a converter formed by DNA-disengaged RuvB subunits stimulates ATP hydrolysis and nucleotide exchange. Immobilization of the converter enables RuvB to convert the ATP-contained energy into a lever motion, pulling 2 nucleotides of DNA out of the RuvA tetramer per ATP hydrolyzed, thus driving DNA branch migration. The RuvB motors rotate together with the DNA substrate, which together with the progressing nucleotide cycle form the mechanistic basis for DNA recombination by continuous HJ branch migration. Branch migration allows RuvC to scan DNA until it finds its consensus sequence, where it cleaves and resolves cruciform DNA. In Pseudomonas putida (strain GB-1), this protein is Holliday junction branch migration complex subunit RuvB.